A 274-amino-acid chain; its full sequence is NH(3)-dependent NAD(+) synthetase (274 aa).

Residue 27-34 participates in ATP binding; it reads GLSGGIDS. D33 contributes to the Mg(2+) binding site. Residue R121 participates in deamido-NAD(+) binding. ATP is bound at residue T141. E146 is a binding site for Mg(2+). K170 and S192 together coordinate ATP.

This sequence belongs to the NAD synthetase family. Homodimer.

The enzyme catalyses deamido-NAD(+) + NH4(+) + ATP = AMP + diphosphate + NAD(+) + H(+). Its pathway is cofactor biosynthesis; NAD(+) biosynthesis; NAD(+) from deamido-NAD(+) (ammonia route): step 1/1. In terms of biological role, catalyzes the ATP-dependent amidation of deamido-NAD to form NAD. Uses ammonia as a nitrogen source. The polypeptide is NH(3)-dependent NAD(+) synthetase (Helicobacter hepaticus (strain ATCC 51449 / 3B1)).